Consider the following 625-residue polypeptide: Endoglucanase 13 (625 aa).

The signal sequence occupies residues 1-34; sequence MAATMNKTPATTFLLIPAAASLVLLLAAAASVEA. The active-site Nucleophile is D91. H427 is a catalytic residue. N440 is a glycosylation site (N-linked (GlcNAc...) asparagine). Catalysis depends on residues D479 and E488. A disordered region spans residues 509–530; that stretch reads ADNTPEYTPAPNAPSPSNGGSP.

Belongs to the glycosyl hydrolase 9 (cellulase E) family. As to expression, expressed in roots and flowers.

The protein resides in the secreted. The catalysed reaction is Endohydrolysis of (1-&gt;4)-beta-D-glucosidic linkages in cellulose, lichenin and cereal beta-D-glucans.. The polypeptide is Endoglucanase 13 (GLU6) (Oryza sativa subsp. japonica (Rice)).